We begin with the raw amino-acid sequence, 418 residues long: Putative methylthiotransferase jhp_0270 (418 aa).

An MTTase N-terminal domain is found at Lys-2–Arg-110. [4Fe-4S] cluster contacts are provided by Cys-11, Cys-45, Cys-74, Cys-144, Cys-148, and Cys-151. The region spanning Phe-130–Ala-355 is the Radical SAM core domain.

Belongs to the methylthiotransferase family. It depends on [4Fe-4S] cluster as a cofactor.

This Helicobacter pylori (strain J99 / ATCC 700824) (Campylobacter pylori J99) protein is Putative methylthiotransferase jhp_0270.